Here is a 98-residue protein sequence, read N- to C-terminus: MFFSRISTIVSMTALFASALAMPTTLTSRQDAICSSGNPQCCDVDVLGVADLDCEAPPAAYTDIKSFSDVCADVGKINMCCDLPVLGQGLICSSPDNS.

An N-terminal signal peptide occupies residues 1–21; sequence MFFSRISTIVSMTALFASALA. 4 disulfides stabilise this stretch: cysteine 34–cysteine 80, cysteine 41–cysteine 71, cysteine 42–cysteine 54, and cysteine 81–cysteine 92.

It belongs to the cerato-ulmin hydrophobin family.

The protein resides in the secreted. It is found in the cell wall. Its function is as follows. Aerial growth, conidiation, and dispersal of filamentous fungi in the environment rely upon a capability of their secreting small amphipathic proteins called hydrophobins (HPBs) with low sequence identity. Class I can self-assemble into an outermost layer of rodlet bundles on aerial cell surfaces, conferring cellular hydrophobicity that supports fungal growth, development and dispersal; whereas Class II form highly ordered films at water-air interfaces through intermolecular interactions but contribute nothing to the rodlet structure. In Botryotinia fuckeliana, hydrophobins are not involved in conferring surface hydrophobicity to conidia and aerial hyphae and their function in sclerotia and fruiting bodies remains to be investigated. The protein is Class II hydrophobin 2 of Botryotinia fuckeliana (strain B05.10) (Noble rot fungus).